The primary structure comprises 158 residues: MTTFTHINHQGEANMVDVSAKQDTVREARAEAFVRMLPTTLNMILSGQHHKGDVFATARIAGIQAAKRTWELIPLCHPLLLSKVEVNLTALPEISSVRVESICKLSGKTGVEMEALTAASIAALTIYDMCKAVQKDIVIEQVRLLEKSGGKSGHFIAE.

Substrate-binding positions include 75 to 77 (LCH) and 113 to 114 (ME). Asp128 is a catalytic residue.

It belongs to the MoaC family. Homohexamer; trimer of dimers.

It carries out the reaction (8S)-3',8-cyclo-7,8-dihydroguanosine 5'-triphosphate = cyclic pyranopterin phosphate + diphosphate. The protein operates within cofactor biosynthesis; molybdopterin biosynthesis. Catalyzes the conversion of (8S)-3',8-cyclo-7,8-dihydroguanosine 5'-triphosphate to cyclic pyranopterin monophosphate (cPMP). The polypeptide is Cyclic pyranopterin monophosphate synthase (Histophilus somni (strain 2336) (Haemophilus somnus)).